Here is a 138-residue protein sequence, read N- to C-terminus: Small ribosomal subunit protein uS11c (138 aa).

The tract at residues 1–25 is disordered; the sequence is MAKSIPRTGSRRNVRSGSRKSTRRI. Basic residues predominate over residues 9–25; sequence GSRRNVRSGSRKSTRRI.

It belongs to the universal ribosomal protein uS11 family. As to quaternary structure, part of the 30S ribosomal subunit.

The protein localises to the plastid. The protein resides in the chloroplast. The polypeptide is Small ribosomal subunit protein uS11c (Eucalyptus globulus subsp. globulus (Tasmanian blue gum)).